The primary structure comprises 1366 residues: MAERTNLMFHNKVIGGTAIKRLISRLIDHFGMAYTSHILDQVKTLGFRQATATSISLGIDDLLTIPSKGWLVRDAEHQNLILEKQHHYGNVHAVEKLRQSIEIWYATSEYFRQEMNPNFRMTDPFNPVHIMSFSGARGNASQVHQLVGMRGLMSDPQGQMIDLPIQSNLREGLSLTEYIISCYGARKGVVDTAVRTSDAGYLTRRLVEVVQHIVIRRTDCGTIRGISVNTQNEMMPESTWTQTLIGRVLADDIYRGSRCIAVRNQDIGIGLFNQFKTFQTQPISIRTPFTCRNTSWICRLCYGQSPTQGHLVELGEAVGIIAGQSIGEPGTQLTLRTFHTGGVFTGGTAEQVRAPYNGKIKFNEDLVHPTRTRHGHPAFLCYIDLYVSIENGDIIHNVTIPPKSFLLVQNNQYVKSEQVIAEILAGTYTFNFKEKVRKHVYSDLEGEMHWSTNVYHASEFKYSNVHILPKTSHLWILSGKSDRSGSVSFSTRKDQDQLNIHSLSTGERDICNHLASNNKIRHKLFHFNPSEKKERRISDYSIINQIICIDHCHFTHPAIFHDTTDLLAKRRRNRFIIPFQFQSIQERDKALMLASSISIEIPINGLFRRNSIFAYFDDPQYRTQSSGITKYRTIDINYILKKEDFVIEYPGVKEFKTKYQMKVDQFFFIPEEVYILPEFSSIMVRNNSIVEVDTPITVNIRSQVSGLVRLEKKKKKIQLKIFSGNIYFPGEMDKISRHSAMLIPPRTVKKNSKGSKKKMKNWIYAQWITITKKKYFVLVRPVILYEIADRIKLIKFFSQDMLQERDNLELQVINYILSGNGKSIRGISNTSIQLVRTCLVLNWDQDKKVSSIEKGHASFVELSINGLVRYFLKIALVKSHISYIRKRNDPSGSRFILDNESDWTNINPFFSMNSREKVQQSLSQNHGTIHMLLNRNDKCRSLIILSSSNCFQIRSFHDGKYYKEEMNPIQRDPLIPIKNSLGPLGIALQVANLDFYLLITHNQISINKNGQLDKLKETFQVFKYYLIDENERIYKPDISSNILLNPFYLNWHFFHHNSCEKKTFPIISLGQFICENVCIVQMKNAPHLKSGQILTVQMDSVGIRSANPYLATPGTTVHGHYGEILSEGDILVTFIYQKSRSGDITQGLPKVEQVLEVRSIDSISINLEKRVGTWNGRITRILGIPWGFFISAELTIAQSRISLVNQIQKVYRSQGVHIHNRHIEIIVRQITSKVLVSEDGMSNVFLPGELIGLLRAERAGRSLEESICYRVLLLGITKTSLNTQSFISEASFQETARVLSKAALRGRIDWLKGLKENVVLGGMMPVGTGFKRIIYRSKQRQYNKITSETKKRIDMIYQSNLGFKNS.

Residues Cys-220, Cys-291, Cys-298, and Cys-301 each contribute to the Zn(2+) site.

It belongs to the RNA polymerase beta' chain family. RpoC2 subfamily. As to quaternary structure, in plastids the minimal PEP RNA polymerase catalytic core is composed of four subunits: alpha, beta, beta', and beta''. When a (nuclear-encoded) sigma factor is associated with the core the holoenzyme is formed, which can initiate transcription. Zn(2+) serves as cofactor.

It localises to the plastid. The protein localises to the chloroplast. The enzyme catalyses RNA(n) + a ribonucleoside 5'-triphosphate = RNA(n+1) + diphosphate. Functionally, DNA-dependent RNA polymerase catalyzes the transcription of DNA into RNA using the four ribonucleoside triphosphates as substrates. The polypeptide is DNA-directed RNA polymerase subunit beta'' (Phaseolus vulgaris (Kidney bean)).